The primary structure comprises 1043 residues: Isoleucine--tRNA ligase (1043 aa).

Positions 48-58 (PFATGLPHYGH) match the 'HIGH' region motif. Residues 591-595 (KMSKR) carry the 'KMSKS' region motif. K594 provides a ligand contact to ATP.

This sequence belongs to the class-I aminoacyl-tRNA synthetase family. IleS type 2 subfamily. In terms of assembly, monomer. Zn(2+) is required as a cofactor.

It is found in the cytoplasm. The catalysed reaction is tRNA(Ile) + L-isoleucine + ATP = L-isoleucyl-tRNA(Ile) + AMP + diphosphate. Catalyzes the attachment of isoleucine to tRNA(Ile). As IleRS can inadvertently accommodate and process structurally similar amino acids such as valine, to avoid such errors it has two additional distinct tRNA(Ile)-dependent editing activities. One activity is designated as 'pretransfer' editing and involves the hydrolysis of activated Val-AMP. The other activity is designated 'posttransfer' editing and involves deacylation of mischarged Val-tRNA(Ile). This Chlamydia pneumoniae (Chlamydophila pneumoniae) protein is Isoleucine--tRNA ligase.